The sequence spans 267 residues: Probable 6-oxopurine nucleoside phosphorylase (267 aa).

Residues Ser-10, 50-51, and 83-84 contribute to the phosphate site; these read RH and SA. Residue Met-188 participates in substrate binding. Thr-189 is a phosphate binding site. A substrate-binding site is contributed by 212 to 214; it reads NYA.

It belongs to the PNP/MTAP phosphorylase family. MTAP subfamily. In terms of assembly, homohexamer. Dimer of a homotrimer.

It carries out the reaction a purine D-ribonucleoside + phosphate = a purine nucleobase + alpha-D-ribose 1-phosphate. It catalyses the reaction guanosine + phosphate = alpha-D-ribose 1-phosphate + guanine. The enzyme catalyses inosine + phosphate = alpha-D-ribose 1-phosphate + hypoxanthine. The protein operates within purine metabolism; purine nucleoside salvage. Functionally, purine nucleoside phosphorylase which is highly specific for 6-oxopurine nucleosides. Cleaves guanosine or inosine to respective bases and sugar-1-phosphate molecules. Involved in purine salvage. This is Probable 6-oxopurine nucleoside phosphorylase from Thermococcus kodakarensis (strain ATCC BAA-918 / JCM 12380 / KOD1) (Pyrococcus kodakaraensis (strain KOD1)).